Here is a 295-residue protein sequence, read N- to C-terminus: Nitrogenase iron protein (295 aa).

Gly11–Ser18 contacts ATP. [4Fe-4S] cluster is bound at residue Cys99. Arg102 is modified (ADP-ribosylarginine; by dinitrogenase reductase ADP-ribosyltransferase). Residue Cys133 coordinates [4Fe-4S] cluster.

This sequence belongs to the NifH/BchL/ChlL family. Homodimer. The cofactor is [4Fe-4S] cluster. The reversible ADP-ribosylation of Arg-102 inactivates the nitrogenase reductase and regulates nitrogenase activity.

It carries out the reaction N2 + 8 reduced [2Fe-2S]-[ferredoxin] + 16 ATP + 16 H2O = H2 + 8 oxidized [2Fe-2S]-[ferredoxin] + 2 NH4(+) + 16 ADP + 16 phosphate + 6 H(+). Its function is as follows. The key enzymatic reactions in nitrogen fixation are catalyzed by the nitrogenase complex, which has 2 components: the iron protein and the molybdenum-iron protein. This Zymomonas mobilis subsp. mobilis (strain ATCC 31821 / ZM4 / CP4) protein is Nitrogenase iron protein.